Reading from the N-terminus, the 251-residue chain is Flap endonuclease Xni (251 aa).

Aspartate 104 serves as a coordination point for Mg(2+). The 5'-3' exonuclease domain maps to 160–248 (VSPQQLSDYW…ALTGNLQQLR (89 aa)). K(+) contacts are provided by leucine 171, alanine 172, proline 180, valine 182, and isoleucine 185. The interval 184-189 (GIGPKT) is interaction with DNA.

The protein belongs to the Xni family. Mg(2+) is required as a cofactor. K(+) serves as cofactor.

Its function is as follows. Has flap endonuclease activity. During DNA replication, flap endonucleases cleave the 5'-overhanging flap structure that is generated by displacement synthesis when DNA polymerase encounters the 5'-end of a downstream Okazaki fragment. The polypeptide is Flap endonuclease Xni (Serratia proteamaculans (strain 568)).